Consider the following 1365-residue polypeptide: Zinc finger protein 423 (1365 aa).

A compositionally biased stretch (basic residues) spans 1 to 11; it reads MSRRKQAKPRS. The tract at residues 1 to 69 is disordered; sequence MSRRKQAKPR…SHDERVGEED (69 aa). Over residues 37–51 the composition is skewed to basic and acidic residues; sequence VSERDSDRKESRAVG. Residues 76–98 form a C2H2-type 1 zinc finger; that stretch reads FTCDNCQQDFECLADLTEHRTNH. Positions 99-126 are disordered; that stretch reads CPADGDDDPGLSWVASSPSSKDVASPSQ. Over residues 112 to 126 the composition is skewed to low complexity; the sequence is VASSPSSKDVASPSQ. C2H2-type zinc fingers lie at residues 150-172, 178-200, 206-228, and 234-256; these read YPCQ…EQIH, FKCT…VKLH, YSCQ…LKTH, and FKCS…MQAH. The segment at 250 to 280 is disordered; it reads QSHMQAHRKNKEHLAKKDQGKRDGSSSDVTE. Positions 261 to 274 are enriched in basic and acidic residues; it reads EHLAKKDQGKRDGS. 3 consecutive C2H2-type zinc fingers follow at residues 286–309, 318–341, and 346–368; these read YMCD…LTQH, LQCI…DRTH, and HKCP…LDSH. Residues 366-429 form a disordered region; the sequence is DSHRQPDSSN…LAPSSDHDDG (64 aa). Low complexity predominate over residues 386–400; that stretch reads SVASMSSATPDSSAS. The segment at 437–461 adopts a C2H2-type 9; degenerate zinc-finger fold; the sequence is YSCPYCSKRDFNSLAVLEIHLKTIH. 3 consecutive C2H2-type zinc fingers follow at residues 469–492, 513–536, and 555–578; these read HTCQ…RKAH, FHCN…RVSH, and FFCN…QQTH. The segment at 603-628 adopts a C2H2-type 13; atypical zinc-finger fold; that stretch reads YSCPYCTNSPIFGSLLKLTKHIKENH. 7 C2H2-type zinc fingers span residues 675-697, 705-728, 736-759, 764-787, 794-817, 831-853, and 857-880; these read YPCN…LKSH, QSCP…LTIH, YVCE…LDMH, YHCT…AVKH, YRCT…KHSH, RKCI…ITTH, and YNCR…REKH. Gly residues predominate over residues 885-895; the sequence is GGNGNGNGGSQ. A disordered region spans residues 885–916; that stretch reads GGNGNGNGGSQNGTPNGVTQSSKRSTAGSTAA. The span at 902–913 shows a compositional bias: polar residues; the sequence is VTQSSKRSTAGS. The C2H2-type 21; degenerate zinc-finger motif lies at 954–976; that stretch reads YACDICGAAYTMESLLQNHRLRD. 8 C2H2-type zinc fingers span residues 1000–1022, 1029–1051, 1090–1112, 1201–1224, 1249–1271, 1279–1301, 1310–1333, and 1340–1363; these read HKCN…AQTH, YMCP…KVTH, FRCV…GTFH, LRCS…QVDH, YQCI…VANH, HECK…LIEH, FKCP…FAVH, and YDCS…LSQH.

Belongs to the krueppel C2H2-type zinc-finger protein family.

The protein localises to the nucleus. Transcription factor that can both act as an activator or a repressor depending on the context. Plays a central role in BMP signaling and olfactory neurogenesis. Associates with SMADs in response to bmp2 leading to activate transcription of BMP target genes. Acts as a transcriptional repressor involved in terminal olfactory receptor neurons differentiation. Involved in olfactory neurogenesis by participating in a developmental switch that regulates the transition from differentiation to maturation in olfactory receptor neurons. This is Zinc finger protein 423 (znf423) from Danio rerio (Zebrafish).